Here is a 459-residue protein sequence, read N- to C-terminus: N-chimaerin (459 aa).

Position 2 is an N-acetylalanine (Ala2). One can recognise an SH2 domain in the interval 49–135 (EFHGMISREA…IETKAAEYIA (87 aa)). Thr192 carries the post-translational modification Phosphothreonine. The segment at 205-255 (IHNFKVHTFRGPHWCEYCANFMWGLIAQGVKCADCGLNVHKQCSKMVPNDC) adopts a Phorbol-ester/DAG-type zinc-finger fold. Residues 268 to 459 (CDLTTLVKAH…LLIKNEDILF (192 aa)) form the Rho-GAP domain. Phosphothreonine is present on Thr340.

As to quaternary structure, interacts with EPHA4; effector of EPHA4 in axon guidance linking EPHA4 activation to RAC1 regulation. In terms of processing, phosphorylated. Phosphorylation is EPHA4 kinase activity-dependent. In neurons in brain regions that are involved in learning and memory processes.

GTPase-activating protein for p21-rac and a phorbol ester receptor. Involved in the assembly of neuronal locomotor circuits as a direct effector of EPHA4 in axon guidance. The polypeptide is N-chimaerin (CHN1) (Homo sapiens (Human)).